Here is a 626-residue protein sequence, read N- to C-terminus: tRNA uridine 5-carboxymethylaminomethyl modification enzyme MnmG (626 aa).

FAD is bound at residue glycine 13–glycine 18. Residue glycine 273 to phenylalanine 287 coordinates NAD(+).

The protein belongs to the MnmG family. Homodimer. Heterotetramer of two MnmE and two MnmG subunits. FAD serves as cofactor.

The protein resides in the cytoplasm. Its function is as follows. NAD-binding protein involved in the addition of a carboxymethylaminomethyl (cmnm) group at the wobble position (U34) of certain tRNAs, forming tRNA-cmnm(5)s(2)U34. In Acinetobacter baumannii (strain ACICU), this protein is tRNA uridine 5-carboxymethylaminomethyl modification enzyme MnmG.